Here is a 411-residue protein sequence, read N- to C-terminus: Cytosolic Fe-S cluster assembly factor narfl (411 aa).

Residues cysteine 11, cysteine 124, cysteine 180, cysteine 329, and cysteine 333 each coordinate [4Fe-4S] cluster.

It belongs to the NARF family. As to quaternary structure, component of the CIA complex.

Its function is as follows. Component of the cytosolic iron-sulfur protein assembly (CIA) complex, a multiprotein complex that mediates the incorporation of iron-sulfur cluster into extramitochondrial Fe/S proteins. The polypeptide is Cytosolic Fe-S cluster assembly factor narfl (narfl) (Danio rerio (Zebrafish)).